Here is a 192-residue protein sequence, read N- to C-terminus: Peptidyl-tRNA hydrolase (192 aa).

Position 17 (Tyr17) interacts with tRNA. The active-site Proton acceptor is His22. TRNA is bound by residues Tyr68, Asn70, and Asn116.

This sequence belongs to the PTH family. Monomer.

It localises to the cytoplasm. The enzyme catalyses an N-acyl-L-alpha-aminoacyl-tRNA + H2O = an N-acyl-L-amino acid + a tRNA + H(+). Hydrolyzes ribosome-free peptidyl-tRNAs (with 1 or more amino acids incorporated), which drop off the ribosome during protein synthesis, or as a result of ribosome stalling. In terms of biological role, catalyzes the release of premature peptidyl moieties from peptidyl-tRNA molecules trapped in stalled 50S ribosomal subunits, and thus maintains levels of free tRNAs and 50S ribosomes. This Mycolicibacterium vanbaalenii (strain DSM 7251 / JCM 13017 / BCRC 16820 / KCTC 9966 / NRRL B-24157 / PYR-1) (Mycobacterium vanbaalenii) protein is Peptidyl-tRNA hydrolase.